A 241-amino-acid polypeptide reads, in one-letter code: Probable transcriptional regulatory protein Reut_A2522 (241 aa).

This sequence belongs to the TACO1 family.

It localises to the cytoplasm. This chain is Probable transcriptional regulatory protein Reut_A2522, found in Cupriavidus pinatubonensis (strain JMP 134 / LMG 1197) (Cupriavidus necator (strain JMP 134)).